A 474-amino-acid polypeptide reads, in one-letter code: tRNA-2-methylthio-N(6)-dimethylallyladenosine synthase (474 aa).

Residues 3-120 (KKLHIKTWGC…LPEMINSVRG (118 aa)) form the MTTase N-terminal domain. 6 residues coordinate [4Fe-4S] cluster: Cys-12, Cys-49, Cys-83, Cys-157, Cys-161, and Cys-164. One can recognise a Radical SAM core domain in the interval 143 to 375 (RAEGPTAFVS…QERINQQAMA (233 aa)). One can recognise a TRAM domain in the interval 378-441 (RRMLGTVQRI…TNSLRGKVVR (64 aa)).

This sequence belongs to the methylthiotransferase family. MiaB subfamily. Monomer. [4Fe-4S] cluster is required as a cofactor.

It is found in the cytoplasm. It catalyses the reaction N(6)-dimethylallyladenosine(37) in tRNA + (sulfur carrier)-SH + AH2 + 2 S-adenosyl-L-methionine = 2-methylsulfanyl-N(6)-dimethylallyladenosine(37) in tRNA + (sulfur carrier)-H + 5'-deoxyadenosine + L-methionine + A + S-adenosyl-L-homocysteine + 2 H(+). Its function is as follows. Catalyzes the methylthiolation of N6-(dimethylallyl)adenosine (i(6)A), leading to the formation of 2-methylthio-N6-(dimethylallyl)adenosine (ms(2)i(6)A) at position 37 in tRNAs that read codons beginning with uridine. The polypeptide is tRNA-2-methylthio-N(6)-dimethylallyladenosine synthase (Citrobacter koseri (strain ATCC BAA-895 / CDC 4225-83 / SGSC4696)).